The following is a 219-amino-acid chain: Apoptosis regulator OPG045 (219 aa).

Belongs to the orthopoxvirus OPG045 family. As to quaternary structure, homodimer. Interacts with host pro-apoptotic protein BCL2L11 (via BH3 domain). Interacts with host NLRP1. Interacts with host BAK.

Its subcellular location is the host mitochondrion outer membrane. The protein resides in the host cytoplasm. Plays a role in evading host innate immune response by inhibiting host inflammasome activation. Interacts with and inhibits NLR-mediated interleukin-1 beta/IL1B production in infected cells. At the host mitochondria outer membrane, interacts with the BH3 domain of host BAK and prevents BAK from binding active BAX. In turn, host apoptosis is inhibited. The chain is Apoptosis regulator OPG045 (OPG045) from Cynomys gunnisoni (Gunnison's prairie dog).